Reading from the N-terminus, the 100-residue chain is MTKVTREEVEHIANLARLQISPEETEEMANTLESILDFAKQNDSADTEGVEPTYHVLDLQNVLREDKAIKGIPQELALKNAKETEDGQFKVPTIMNEEDL.

This sequence belongs to the GatC family. As to quaternary structure, heterotrimer of A, B and C subunits.

It carries out the reaction L-glutamyl-tRNA(Gln) + L-glutamine + ATP + H2O = L-glutaminyl-tRNA(Gln) + L-glutamate + ADP + phosphate + H(+). The enzyme catalyses L-aspartyl-tRNA(Asn) + L-glutamine + ATP + H2O = L-asparaginyl-tRNA(Asn) + L-glutamate + ADP + phosphate + 2 H(+). In terms of biological role, allows the formation of correctly charged Asn-tRNA(Asn) or Gln-tRNA(Gln) through the transamidation of misacylated Asp-tRNA(Asn) or Glu-tRNA(Gln) in organisms which lack either or both of asparaginyl-tRNA or glutaminyl-tRNA synthetases. The reaction takes place in the presence of glutamine and ATP through an activated phospho-Asp-tRNA(Asn) or phospho-Glu-tRNA(Gln). This is Aspartyl/glutamyl-tRNA(Asn/Gln) amidotransferase subunit C from Staphylococcus aureus (strain Newman).